Consider the following 150-residue polypeptide: D-aminoacyl-tRNA deacylase (150 aa).

The short motif at 137–138 (GP) is the Gly-cisPro motif, important for rejection of L-amino acids element.

This sequence belongs to the DTD family. Homodimer.

It is found in the cytoplasm. It catalyses the reaction glycyl-tRNA(Ala) + H2O = tRNA(Ala) + glycine + H(+). It carries out the reaction a D-aminoacyl-tRNA + H2O = a tRNA + a D-alpha-amino acid + H(+). In terms of biological role, an aminoacyl-tRNA editing enzyme that deacylates mischarged D-aminoacyl-tRNAs. Also deacylates mischarged glycyl-tRNA(Ala), protecting cells against glycine mischarging by AlaRS. Acts via tRNA-based rather than protein-based catalysis; rejects L-amino acids rather than detecting D-amino acids in the active site. By recycling D-aminoacyl-tRNA to D-amino acids and free tRNA molecules, this enzyme counteracts the toxicity associated with the formation of D-aminoacyl-tRNA entities in vivo and helps enforce protein L-homochirality. The sequence is that of D-aminoacyl-tRNA deacylase from Heliobacterium modesticaldum (strain ATCC 51547 / Ice1).